The following is a 106-amino-acid chain: Large ribosomal subunit protein bL21 (106 aa).

Belongs to the bacterial ribosomal protein bL21 family. Part of the 50S ribosomal subunit. Contacts protein L20.

Its function is as follows. This protein binds to 23S rRNA in the presence of protein L20. The protein is Large ribosomal subunit protein bL21 of Chlamydia caviae (strain ATCC VR-813 / DSM 19441 / 03DC25 / GPIC) (Chlamydophila caviae).